The chain runs to 1010 residues: Phosphatidylserine decarboxylase proenzyme 2 (1010 aa).

C2 domains follow at residues 1–114 (MSQA…SSWE) and 247–370 (DFES…DKPC). Asp-342, Ser-345, and Asp-348 together coordinate Ca(2+). The EF-hand domain occupies 458–493 (LRRQLWMHLLQGNDTQMKGTLDLIELNYFVDCLGSN). Catalysis depends on charge relay system; for autoendoproteolytic cleavage activity residues Asp-734, His-793, and Ser-880. Ser-880 serves as the catalytic Schiff-base intermediate with substrate; via pyruvic acid; for decarboxylase activity. Position 880 is a pyruvic acid (Ser); by autocatalysis (Ser-880).

Belongs to the phosphatidylserine decarboxylase family. PSD-B subfamily. Eukaryotic type II sub-subfamily. Heterodimer of a large membrane-associated beta subunit and a small pyruvoyl-containing alpha subunit. Interacts with pstB2. This interaction may be a means to structurally tether the donor membrane (ER) harboring PstB2 to acceptor membranes (Golgi/endosomes) harboring PSD2 during PtdSer transport to the site of PtdEtn synthesis. The cofactor is pyruvate. Requires Ca(2+) as cofactor. In terms of processing, is synthesized initially as an inactive proenzyme. Formation of the active enzyme involves a self-maturation process in which the active site pyruvoyl group is generated from an internal serine residue via an autocatalytic post-translational modification. Two non-identical subunits are generated from the proenzyme in this reaction, and the pyruvate is formed at the N-terminus of the alpha chain, which is derived from the carboxyl end of the proenzyme. The autoendoproteolytic cleavage occurs by a canonical serine protease mechanism, in which the side chain hydroxyl group of the serine supplies its oxygen atom to form the C-terminus of the beta chain, while the remainder of the serine residue undergoes an oxidative deamination to produce ammonia and the pyruvoyl prosthetic group on the alpha chain. During this reaction, the Ser that is part of the protease active site of the proenzyme becomes the pyruvoyl prosthetic group, which constitutes an essential element of the active site of the mature decarboxylase.

Its subcellular location is the golgi apparatus membrane. The protein resides in the endosome membrane. It catalyses the reaction a 1,2-diacyl-sn-glycero-3-phospho-L-serine + H(+) = a 1,2-diacyl-sn-glycero-3-phosphoethanolamine + CO2. Its pathway is phospholipid metabolism; phosphatidylethanolamine biosynthesis; phosphatidylethanolamine from CDP-diacylglycerol: step 2/2. Its function is as follows. Catalyzes the formation of phosphatidylethanolamine (PtdEtn) from phosphatidylserine (PtdSer). Plays a central role in phospholipid metabolism and in the interorganelle trafficking of phosphatidylserine. In Komagataella phaffii (strain GS115 / ATCC 20864) (Yeast), this protein is Phosphatidylserine decarboxylase proenzyme 2.